Consider the following 246-residue polypeptide: Probable transcriptional regulatory protein CKO_01097 (246 aa).

Positions 1 to 20 (MAGHSKWANTRHRKAAQDAK) are disordered.

It belongs to the TACO1 family.

The protein localises to the cytoplasm. This Citrobacter koseri (strain ATCC BAA-895 / CDC 4225-83 / SGSC4696) protein is Probable transcriptional regulatory protein CKO_01097.